The primary structure comprises 465 residues: ATP synthase subunit beta (465 aa).

Residue 155–162 (GGAGVGKT) coordinates ATP.

This sequence belongs to the ATPase alpha/beta chains family. F-type ATPases have 2 components, CF(1) - the catalytic core - and CF(0) - the membrane proton channel. CF(1) has five subunits: alpha(3), beta(3), gamma(1), delta(1), epsilon(1). CF(0) has three main subunits: a(1), b(2) and c(9-12). The alpha and beta chains form an alternating ring which encloses part of the gamma chain. CF(1) is attached to CF(0) by a central stalk formed by the gamma and epsilon chains, while a peripheral stalk is formed by the delta and b chains.

The protein resides in the cell membrane. It catalyses the reaction ATP + H2O + 4 H(+)(in) = ADP + phosphate + 5 H(+)(out). In terms of biological role, produces ATP from ADP in the presence of a proton gradient across the membrane. The catalytic sites are hosted primarily by the beta subunits. This is ATP synthase subunit beta from Buchnera aphidicola subsp. Baizongia pistaciae (strain Bp).